A 137-amino-acid chain; its full sequence is Large ribosomal subunit protein uL16 (137 aa).

This sequence belongs to the universal ribosomal protein uL16 family. Part of the 50S ribosomal subunit.

In terms of biological role, binds 23S rRNA and is also seen to make contacts with the A and possibly P site tRNAs. This chain is Large ribosomal subunit protein uL16, found in Leptospira biflexa serovar Patoc (strain Patoc 1 / Ames).